Consider the following 192-residue polypeptide: Protein CREG1 (192 aa).

Positions M1–G18 are cleaved as a signal peptide. N-linked (GlcNAc...) asparagine glycans are attached at residues N95, N133, and N166.

This sequence belongs to the CREG family.

It is found in the secreted. In terms of biological role, may contribute to the transcriptional control of cell growth and differentiation. This is Protein CREG1 (CREG1) from Gallus gallus (Chicken).